A 195-amino-acid chain; its full sequence is Imidazoleglycerol-phosphate dehydratase (195 aa).

Belongs to the imidazoleglycerol-phosphate dehydratase family.

It localises to the cytoplasm. It catalyses the reaction D-erythro-1-(imidazol-4-yl)glycerol 3-phosphate = 3-(imidazol-4-yl)-2-oxopropyl phosphate + H2O. The protein operates within amino-acid biosynthesis; L-histidine biosynthesis; L-histidine from 5-phospho-alpha-D-ribose 1-diphosphate: step 6/9. This chain is Imidazoleglycerol-phosphate dehydratase, found in Cereibacter sphaeroides (strain ATCC 17023 / DSM 158 / JCM 6121 / CCUG 31486 / LMG 2827 / NBRC 12203 / NCIMB 8253 / ATH 2.4.1.) (Rhodobacter sphaeroides).